A 247-amino-acid chain; its full sequence is 5-oxoprolinase subunit A (247 aa).

The protein belongs to the LamB/PxpA family. Forms a complex composed of PxpA, PxpB and PxpC.

It carries out the reaction 5-oxo-L-proline + ATP + 2 H2O = L-glutamate + ADP + phosphate + H(+). Functionally, catalyzes the cleavage of 5-oxoproline to form L-glutamate coupled to the hydrolysis of ATP to ADP and inorganic phosphate. This Histophilus somni (strain 129Pt) (Haemophilus somnus) protein is 5-oxoprolinase subunit A.